The primary structure comprises 131 residues: MDFQQLADVAEKWCSSTPFELIAAEETERRMDFYADPGVSFYVLCPDNGCGDSFHVWSESEDCLPFLQLAQDYISSCGKKTLHEVLEKVFKSFRPLLGLPDADDDAFEEYSADVEEEEPEADHPQMGVSQQ.

Tyr-34 carries the post-translational modification Phosphotyrosine. The segment covering 107 to 120 (FEEYSADVEEEEPE) has biased composition (acidic residues). The tract at residues 107–131 (FEEYSADVEEEEPEADHPQMGVSQQ) is disordered.

The protein belongs to the MTURN family. In terms of processing, phosphorylation at Tyr-34 is essential for its ability to promote megakaryocyte differentiation. Expressed in the thymus, bone marrow and spleen.

Its subcellular location is the cytoplasm. Its function is as follows. Promotes megakaryocyte differentiation by enhancing ERK and JNK signaling as well as up-regulating RUNX1 and FLI1 expression. Represses NF-kappa-B transcriptional activity by inhibiting phosphorylation of RELA at 'Ser- 536'. May be involved in early neuronal development. The sequence is that of Maturin (Mturn) from Mus musculus (Mouse).